A 434-amino-acid chain; its full sequence is F-box/LRR-repeat protein 21 (434 aa).

An F-box domain is found at 39–85; that stretch reads LLDWGTLPHHVILQIFQYLPLIDRARASSVCRRWNEVFHIPDLWRKF. LRR repeat units follow at residues 187 to 213, 214 to 239, 242 to 265, 322 to 347, 349 to 374, and 375 to 400; these read DTPV…KMSS, CPHV…ALNY, LSDE…RIDV, GRSV…VVCA, GLLP…GLSE, and CEVS…SIME.

Part of the SCF (SKP1-CUL1-F-box) E3 ubiquitin-protein ligase complex SCF(FBXL21) composed of CUL1, SKP1, RBX1 and FBXL21. Interacts with CRY1 and CRY2. Expressed in the hypothalamus, especially in the suprachiasmatic nucleus (SCN). Expression is driven by the core-clock. There is a pronounced diurnal and circadian expression rhythms rising rapidly at the start of the day and declining at the onset of the night.

It localises to the cytoplasm. Its subcellular location is the cytosol. The protein resides in the nucleus. It participates in protein modification; protein ubiquitination. Its function is as follows. Substrate-recognition component of the SCF(FBXL21) E3 ubiquitin ligase complex involved in circadian rhythm function. Plays a key role in the maintenance of both the speed and the robustness of the circadian clock oscillation. The SCF(FBXL21) complex mainly acts in the cytosol and mediates ubiquitination of CRY proteins (CRY1 and CRY2), leading to CRY proteins stabilization. The SCF(FBXL21) complex counteracts the activity of the SCF(FBXL3) complex and protects CRY proteins from degradation. Involved in the hypothalamic suprachiasmatic nucleus (SCN) clock regulating temporal organization of the daily activities. The protein is F-box/LRR-repeat protein 21 (Fbxl21) of Mus musculus (Mouse).